The chain runs to 211 residues: Ubiquitin-conjugating enzyme E2 S-C (211 aa).

The region spanning 11 to 157 (HIIRRVYKEV…AKLMTEIHAQ (147 aa)) is the UBC core domain. Cys-95 (glycyl thioester intermediate) is an active-site residue. The segment at 158–211 (GSTLRGKDPTDPCSSASATVVSGDGPMAKKHAGDRDKKLAAKKKTDKKRALRRL) is disordered. Positions 197–211 (AAKKKTDKKRALRRL) are enriched in basic residues.

Belongs to the ubiquitin-conjugating enzyme family.

It catalyses the reaction S-ubiquitinyl-[E1 ubiquitin-activating enzyme]-L-cysteine + [E2 ubiquitin-conjugating enzyme]-L-cysteine = [E1 ubiquitin-activating enzyme]-L-cysteine + S-ubiquitinyl-[E2 ubiquitin-conjugating enzyme]-L-cysteine.. Its pathway is protein modification; protein ubiquitination. Catalyzes the covalent attachment of ubiquitin to other proteins. Acts as an essential factor of the anaphase promoting complex/cyclosome (APC/C), a cell cycle-regulated ubiquitin ligase that controls progression through mitosis. Acts by specifically elongating 'Lys-11'-linked polyubiquitin chains initiated by the E2 enzyme ube2c/ubch10 on APC/C substrates, enhancing the degradation of APC/C substrates by the proteasome and promoting mitotic exit. The protein is Ubiquitin-conjugating enzyme E2 S-C (ube2s-c) of Xenopus laevis (African clawed frog).